Here is a 190-residue protein sequence, read N- to C-terminus: Bifunctional protein PyrR (190 aa).

The PRPP-binding signature appears at 112-124 (VILVDDVLYSGRS).

This sequence belongs to the purine/pyrimidine phosphoribosyltransferase family. PyrR subfamily.

It carries out the reaction UMP + diphosphate = 5-phospho-alpha-D-ribose 1-diphosphate + uracil. Functionally, regulates the transcription of the pyrimidine nucleotide (pyr) operon in response to exogenous pyrimidines. Its function is as follows. Also displays a weak uracil phosphoribosyltransferase activity which is not physiologically significant. This Mycolicibacterium paratuberculosis (strain ATCC BAA-968 / K-10) (Mycobacterium paratuberculosis) protein is Bifunctional protein PyrR.